The primary structure comprises 224 residues: Phosphoglycolate phosphatase (224 aa).

Catalysis depends on D8, which acts as the Nucleophile. D8, D10, G11, and G43 together coordinate Mg(2+). K151 is a substrate binding site. Mg(2+) contacts are provided by D174, S175, and D178.

Belongs to the HAD-like hydrolase superfamily. Archaeal SPP-like hydrolase family. Homodimer. Mg(2+) serves as cofactor.

It catalyses the reaction 2-phosphoglycolate + H2O = glycolate + phosphate. Its activity is regulated as follows. Inhibited by Ca(2+) ions and by high chloride ion concentration. By contrast, low chloride concentration (up to 50 mM) slightly activate the enzyme. In terms of biological role, catalyzes the dephosphorylation of 2-phosphoglycolate. Also has significant, but less efficient, pyrophosphatase activity, since it is able to catalyze the release of phosphate from inorganic pyrophosphate (PPi). The chain is Phosphoglycolate phosphatase from Thermoplasma acidophilum (strain ATCC 25905 / DSM 1728 / JCM 9062 / NBRC 15155 / AMRC-C165).